A 190-amino-acid polypeptide reads, in one-letter code: Large ribosomal subunit protein uL5 (190 aa).

It belongs to the universal ribosomal protein uL5 family. Part of the 50S ribosomal subunit; part of the 5S rRNA/L5/L18/L25 subcomplex. Contacts the 5S rRNA and the P site tRNA. Forms a bridge to the 30S subunit in the 70S ribosome.

Its function is as follows. This is one of the proteins that bind and probably mediate the attachment of the 5S RNA into the large ribosomal subunit, where it forms part of the central protuberance. In the 70S ribosome it contacts protein S13 of the 30S subunit (bridge B1b), connecting the 2 subunits; this bridge is implicated in subunit movement. Contacts the P site tRNA; the 5S rRNA and some of its associated proteins might help stabilize positioning of ribosome-bound tRNAs. The sequence is that of Large ribosomal subunit protein uL5 from Bifidobacterium longum (strain DJO10A).